Consider the following 183-residue polypeptide: SAYSvFN domain-containing protein 1 (183 aa).

The Cytoplasmic portion of the chain corresponds to 1–105; sequence MEQRLAEFRA…SFLTNITFLK (105 aa). Residues 11 to 36 form a disordered region; that stretch reads ARKRAGLAAQPPAASQGAQTPGEKAE. Over residues 16-36 the composition is skewed to low complexity; it reads GLAAQPPAASQGAQTPGEKAE. The tract at residues 91–105 is middle helical (MH); sequence SCWDQSFLTNITFLK. An intramembrane region (helical) is located at residues 106–126; the sequence is VLLWLVLLGLFVELEFGLAYF. The Cytoplasmic segment spans residues 127-183; sequence VLSLFYWMYVGTRGPEEKKEGEKSAYSVFNPGCEAIQGTLTAEQLERELQLRPLAGR.

The protein belongs to the SAYSD1 family. As to quaternary structure, associates (via N-terminus) with ribosomes.

It localises to the endoplasmic reticulum membrane. The protein localises to the cytoplasmic vesicle membrane. Ufmylation 'reader' component of a translocation-associated quality control pathway, a mechanism that takes place when a ribosome has stalled during translation, and which is required to degrade clogged substrates. Specifically recognizes and binds ufmylated ribosomes when a ribosome has stalled, promoting the transport of stalled nascent chain via the TRAPP complex to lysosomes for degradation. This Homo sapiens (Human) protein is SAYSvFN domain-containing protein 1.